The following is a 501-amino-acid chain: MDALLQLKGIDKAFPGVKALSGAALNVYPGRVMALVGENGAGKSTMMKVLTGIYTRDAGSLLWLGKETTFNGPKSSQEAGIGIIHQELNLIPQLTIAENIFLGREFVNRFGKIDWKKMYAEADHLLAKLNLRFKSDKLVGELSIGDQQMVEIAKVLSFESKVIIMDEPTDALTDTETDSLFRVIRELKSQGRGIVYISHRMKEIFEICDDVTVFRDGQFIAEREVATLTEDSLIEMMVGRKLEDQYPHLDNAPGEIRLKVDNLCGPGVNDVSFVLRKGEILGISGLMGTGRTELMKVLYGAMPRTSGYVTLEGHEVVTRSPQDGLANGIVYISEDRKRDGLVLGMSVKENMSLTALDYFSRAGGSLKHKDEQQAVGDFIRLFNVKTPSMEQAIGLLSGGNQQKVAIARGLMTRPKVLILDEPTRGVDVGAKKEIYQLINQFKADGLSIILVSSEMPEVLGMSDRIIVMHEGHLSGEFTREQATQEVLMAAAVGKLNRVNQE.

ABC transporter domains follow at residues 5-241 (LQLK…VGRK) and 252-495 (APGE…VGKL). ATP is bound at residue 37 to 44 (GENGAGKS).

The protein belongs to the ABC transporter superfamily. Ribose importer (TC 3.A.1.2.1) family. The complex is composed of an ATP-binding protein (RbsA), two transmembrane proteins (RbsC) and a solute-binding protein (RbsB).

The protein resides in the cell inner membrane. It catalyses the reaction D-ribose(out) + ATP + H2O = D-ribose(in) + ADP + phosphate + H(+). Functionally, part of the ABC transporter complex RbsABC involved in ribose import. Responsible for energy coupling to the transport system. The sequence is that of Ribose import ATP-binding protein RbsA from Salmonella typhi.